A 313-amino-acid polypeptide reads, in one-letter code: Carbamate kinase (313 aa).

This sequence belongs to the carbamate kinase family.

The protein localises to the cytoplasm. It carries out the reaction hydrogencarbonate + NH4(+) + ATP = carbamoyl phosphate + ADP + H2O + H(+). It participates in metabolic intermediate metabolism; carbamoyl phosphate degradation; CO(2) and NH(3) from carbamoyl phosphate: step 1/1. This chain is Carbamate kinase (arcC), found in Oenococcus oeni (Leuconostoc oenos).